Consider the following 567-residue polypeptide: Proline--tRNA ligase (567 aa).

Belongs to the class-II aminoacyl-tRNA synthetase family. ProS type 1 subfamily. In terms of assembly, homodimer.

It localises to the cytoplasm. The catalysed reaction is tRNA(Pro) + L-proline + ATP = L-prolyl-tRNA(Pro) + AMP + diphosphate. Functionally, catalyzes the attachment of proline to tRNA(Pro) in a two-step reaction: proline is first activated by ATP to form Pro-AMP and then transferred to the acceptor end of tRNA(Pro). As ProRS can inadvertently accommodate and process non-cognate amino acids such as alanine and cysteine, to avoid such errors it has two additional distinct editing activities against alanine. One activity is designated as 'pretransfer' editing and involves the tRNA(Pro)-independent hydrolysis of activated Ala-AMP. The other activity is designated 'posttransfer' editing and involves deacylation of mischarged Ala-tRNA(Pro). The misacylated Cys-tRNA(Pro) is not edited by ProRS. The polypeptide is Proline--tRNA ligase (Staphylococcus aureus (strain Mu3 / ATCC 700698)).